A 241-amino-acid polypeptide reads, in one-letter code: MNRCWALFLSLCCYLRLVSAEGDPIPEELYEMLSDHSIRSFDDLQRLLHGDPGEEDGAELDLNMTRSHSGGELESLARGRRSLGSLTIAEPAMIAECKTRTEVFEISRRLIDRTNANFLVWPPCVEVQRCSGCCNNRNVQCRPTQVQLRPVQVRKIEIVRKKPIFKKATVTLEDHLACKCETVAAARPVTRSPGGSQEQRAKTPQTRVTIRTVRVRRPPKGKHRKFKHTHDKTALKETLGA.

A signal peptide spans 1–20 (MNRCWALFLSLCCYLRLVSA). Positions 21–81 (EGDPIPEELY…ELESLARGRR (61 aa)) are cleaved as a propeptide — removed in mature form. Asparagine 63 carries N-linked (GlcNAc...) asparagine glycosylation. 3 disulfide bridges follow: cysteine 97–cysteine 141, cysteine 130–cysteine 178, and cysteine 134–cysteine 180. Positions 191–241 (RSPGGSQEQRAKTPQTRVTIRTVRVRRPPKGKHRKFKHTHDKTALKETLGA) are cleaved as a propeptide — removed in mature form. Basic residues predominate over residues 216 to 230 (RRPPKGKHRKFKHTH). The interval 216–241 (RRPPKGKHRKFKHTHDKTALKETLGA) is disordered.

Belongs to the PDGF/VEGF growth factor family. In terms of assembly, antiparallel homodimer; disulfide-linked. Antiparallel heterodimer with PDGFA; disulfide-linked. The PDGFB homodimer interacts with PDGFRA and PDGFRB homodimers, and with heterodimers formed by PDGFRA and PDGFRB. The heterodimer composed of PDGFA and PDGFB interacts with PDGFRB homodimers, and with heterodimers formed by PDGFRA and PDGFRB. Interacts with XLKD1. Interacts with LRP1. Interacts with SORL1 (via the N-terminal ectodomain). Interacts with CD82; this interaction inhibits PDGFB-mediated signaling pathway. Expressed at high levels in the heart, brain (sustantia nigra), placenta and fetal kidney. Expressed at moderate levels in the brain (hippocampus), skeletal muscle, kidney and lung.

It localises to the secreted. In terms of biological role, growth factor that plays an essential role in the regulation of embryonic development, cell proliferation, cell migration, survival and chemotaxis. Potent mitogen for cells of mesenchymal origin. Required for normal proliferation and recruitment of pericytes and vascular smooth muscle cells in the central nervous system, skin, lung, heart and placenta. Required for normal blood vessel development, and for normal development of kidney glomeruli. Plays an important role in wound healing. Signaling is modulated by the formation of heterodimers with PDGFA. This Homo sapiens (Human) protein is Platelet-derived growth factor subunit B (PDGFB).